The chain runs to 427 residues: Enolase (427 aa).

Residue glutamine 163 coordinates (2R)-2-phosphoglycerate. Glutamate 205 (proton donor) is an active-site residue. 3 residues coordinate Mg(2+): aspartate 242, glutamate 285, and aspartate 312. 4 residues coordinate (2R)-2-phosphoglycerate: lysine 337, arginine 366, serine 367, and lysine 388. Lysine 337 functions as the Proton acceptor in the catalytic mechanism.

Belongs to the enolase family. Mg(2+) is required as a cofactor.

It localises to the cytoplasm. Its subcellular location is the secreted. It is found in the cell surface. The enzyme catalyses (2R)-2-phosphoglycerate = phosphoenolpyruvate + H2O. Its pathway is carbohydrate degradation; glycolysis; pyruvate from D-glyceraldehyde 3-phosphate: step 4/5. Its function is as follows. Catalyzes the reversible conversion of 2-phosphoglycerate (2-PG) into phosphoenolpyruvate (PEP). It is essential for the degradation of carbohydrates via glycolysis. The protein is Enolase of Burkholderia lata (strain ATCC 17760 / DSM 23089 / LMG 22485 / NCIMB 9086 / R18194 / 383).